We begin with the raw amino-acid sequence, 276 residues long: Elongation factor Ts (276 aa).

Positions T76 to V79 are involved in Mg(2+) ion dislocation from EF-Tu.

This sequence belongs to the EF-Ts family.

The protein localises to the cytoplasm. Its function is as follows. Associates with the EF-Tu.GDP complex and induces the exchange of GDP to GTP. It remains bound to the aminoacyl-tRNA.EF-Tu.GTP complex up to the GTP hydrolysis stage on the ribosome. The polypeptide is Elongation factor Ts (Mycobacterium leprae (strain Br4923)).